A 223-amino-acid polypeptide reads, in one-letter code: Ethylene-inducing xylanase (223 aa).

An N-terminal signal peptide occupies residues 1 to 19; that stretch reads MVSFTTLLAGFVAVTGVLS. The region spanning 34 to 223 is the GH11 domain; it reads QTIGPGTGFN…SSGNANINVS (190 aa). N94 carries an N-linked (GlcNAc...) asparagine glycan. E119 serves as the catalytic Nucleophile. Catalysis depends on E210, which acts as the Proton donor.

Belongs to the glycosyl hydrolase 11 (cellulase G) family. As to quaternary structure, interactc with tomato LeEix2 receptor to trigger its internalization.

The protein resides in the secreted. It carries out the reaction Endohydrolysis of (1-&gt;4)-beta-D-xylosidic linkages in xylans.. It functions in the pathway glycan degradation; xylan degradation. In terms of biological role, endo-1,4-beta-xylanase involved in the hydrolysis of xylan, a major structural heterogeneous polysaccharide found in plant biomass representing the second most abundant polysaccharide in the biosphere, after cellulose. Acts as an elicitor of plant defense responses in hosts such as tobacco (Nicotiana tabacum) or tomato (Solanum lycopersicum). Induces the production of ethylene and leads alterations in membrane function with rapid efflux of potassium, uptake of calcium, alkalization of the medium, increased leakage of cellular components and necrosis in plant hosts. EIX is translocated through the xylem of the host plant to the leaf mesophyll, leading to host response to pathogen-derived extracellular proteins in tissues distant from the invading pathogen. Greatly enhances the expression of two calcineurin B-like proteins-interacting protein kinases (CIPKs) family members, OsCIPK14 and OsCIPK15, in rice cultured cells. In tomato, triggers the defense response via binding to and subsequent internalization of the LeEix2 receptor. The protein is Ethylene-inducing xylanase of Hypocrea rufa (Trichoderma viride).